The sequence spans 349 residues: MTVLNRMDTLAEDMVADITDSPTGYTGVDGDAQWAAEVRRLAKLRGATILAHNYQLPEIQDVADHVGDSLALSRIAAEAPEDTIVFCGVHFMAETAKILSPDKTVLIPDQRAGCSLADSITPEDLRAWKDEHPGAVVVSYFNTTAAVKALTDICCTSSNAVDVVASIDPDREVLFCPDQFLGAHVRRMTGRENLHVWAGECHVHAGINGDELGERARANPDAELFVHPECGCATSALYLAGEGAFPAERVKILSTGGMLDAANTTSARKVLVATEVGMLYQLRRAAPQVDFQAVNDRASCRYMKMITPAALLRCLVEGADEVHVDPGIAAAGRRSVQRMIEIGQPGGGE.

2 residues coordinate iminosuccinate: His-52 and Ser-69. [4Fe-4S] cluster is bound at residue Cys-114. Iminosuccinate-binding positions include 140-142 (YFN) and Ser-157. Cys-201 provides a ligand contact to [4Fe-4S] cluster. Iminosuccinate contacts are provided by residues 227-229 (HPE) and Thr-255. Cys-300 lines the [4Fe-4S] cluster pocket.

It belongs to the quinolinate synthase family. Type 2 subfamily. The cofactor is [4Fe-4S] cluster.

The protein resides in the cytoplasm. The enzyme catalyses iminosuccinate + dihydroxyacetone phosphate = quinolinate + phosphate + 2 H2O + H(+). It participates in cofactor biosynthesis; NAD(+) biosynthesis; quinolinate from iminoaspartate: step 1/1. In terms of biological role, catalyzes the condensation of iminoaspartate with dihydroxyacetone phosphate to form quinolinate. The sequence is that of Quinolinate synthase from Mycolicibacterium paratuberculosis (strain ATCC BAA-968 / K-10) (Mycobacterium paratuberculosis).